The sequence spans 701 residues: Elongation factor G 1 (701 aa).

One can recognise a tr-type G domain in the interval 13–288 (KYTRNIGIMA…GVIDYLPSPL (276 aa)). Residues 22–29 (AHIDAGKT), 86–90 (DTPGH), and 140–143 (NKMD) contribute to the GTP site.

It belongs to the TRAFAC class translation factor GTPase superfamily. Classic translation factor GTPase family. EF-G/EF-2 subfamily.

The protein localises to the cytoplasm. Functionally, catalyzes the GTP-dependent ribosomal translocation step during translation elongation. During this step, the ribosome changes from the pre-translocational (PRE) to the post-translocational (POST) state as the newly formed A-site-bound peptidyl-tRNA and P-site-bound deacylated tRNA move to the P and E sites, respectively. Catalyzes the coordinated movement of the two tRNA molecules, the mRNA and conformational changes in the ribosome. The sequence is that of Elongation factor G 1 from Bdellovibrio bacteriovorus (strain ATCC 15356 / DSM 50701 / NCIMB 9529 / HD100).